Here is a 160-residue protein sequence, read N- to C-terminus: MGVTKKPDLTDPVLRAKLAKGMGHNYYGEPAWPNDLLYIFPVVIFGTIACNVGLAVMEPSMIGEPANPFATPLEILPEWYFFPVFQILRTVPNKLLGVLLMAAVPAGLLTVPFLENVNKFQNPFRRPVATTVFLIGTVVSIWLGIGAAMPIDQSLTLGLF.

3 helical membrane-spanning segments follow: residues 36–56, 95–115, and 131–151; these read LLYIFPVVIFGTIACNVGLAV, LLGVLLMAAVPAGLLTVPFLE, and TVFLIGTVVSIWLGIGAAMPI.

It belongs to the cytochrome b family. PetD subfamily. As to quaternary structure, the 4 large subunits of the cytochrome b6-f complex are cytochrome b6, subunit IV (17 kDa polypeptide, petD), cytochrome f and the Rieske protein, while the 4 small subunits are petG, petL, petM and petN. The complex functions as a dimer.

The protein localises to the plastid. Its subcellular location is the chloroplast thylakoid membrane. Component of the cytochrome b6-f complex, which mediates electron transfer between photosystem II (PSII) and photosystem I (PSI), cyclic electron flow around PSI, and state transitions. The chain is Cytochrome b6-f complex subunit 4 from Zygnema circumcarinatum (Green alga).